A 335-amino-acid chain; its full sequence is Holliday junction branch migration complex subunit RuvB (335 aa).

The segment at 4-184 (ADRIISGQAK…FGIVQRLEFY (181 aa)) is large ATPase domain (RuvB-L). ATP contacts are provided by residues I23, R24, G65, K68, T69, T70, 131–133 (EDY), R174, Y184, and R221. T69 serves as a coordination point for Mg(2+). The small ATPAse domain (RuvB-S) stretch occupies residues 185-255 (SVEDLTSIVA…VAKQALSMLD (71 aa)). Residues 258–335 (DAGFDYLDRK…RHFGLQKLSD (78 aa)) form a head domain (RuvB-H) region. The DNA site is built by R294, R313, and R318.

Belongs to the RuvB family. As to quaternary structure, homohexamer. Forms an RuvA(8)-RuvB(12)-Holliday junction (HJ) complex. HJ DNA is sandwiched between 2 RuvA tetramers; dsDNA enters through RuvA and exits via RuvB. An RuvB hexamer assembles on each DNA strand where it exits the tetramer. Each RuvB hexamer is contacted by two RuvA subunits (via domain III) on 2 adjacent RuvB subunits; this complex drives branch migration. In the full resolvosome a probable DNA-RuvA(4)-RuvB(12)-RuvC(2) complex forms which resolves the HJ.

The protein resides in the cytoplasm. It carries out the reaction ATP + H2O = ADP + phosphate + H(+). Functionally, the RuvA-RuvB-RuvC complex processes Holliday junction (HJ) DNA during genetic recombination and DNA repair, while the RuvA-RuvB complex plays an important role in the rescue of blocked DNA replication forks via replication fork reversal (RFR). RuvA specifically binds to HJ cruciform DNA, conferring on it an open structure. The RuvB hexamer acts as an ATP-dependent pump, pulling dsDNA into and through the RuvAB complex. RuvB forms 2 homohexamers on either side of HJ DNA bound by 1 or 2 RuvA tetramers; 4 subunits per hexamer contact DNA at a time. Coordinated motions by a converter formed by DNA-disengaged RuvB subunits stimulates ATP hydrolysis and nucleotide exchange. Immobilization of the converter enables RuvB to convert the ATP-contained energy into a lever motion, pulling 2 nucleotides of DNA out of the RuvA tetramer per ATP hydrolyzed, thus driving DNA branch migration. The RuvB motors rotate together with the DNA substrate, which together with the progressing nucleotide cycle form the mechanistic basis for DNA recombination by continuous HJ branch migration. Branch migration allows RuvC to scan DNA until it finds its consensus sequence, where it cleaves and resolves cruciform DNA. The chain is Holliday junction branch migration complex subunit RuvB from Haemophilus influenzae (strain 86-028NP).